The chain runs to 155 residues: Transcriptional regulator MraZ (155 aa).

2 SpoVT-AbrB domains span residues 7 to 63 (REQH…EPSV) and 92 to 135 (LDQT…EPLR).

It belongs to the MraZ family. As to quaternary structure, forms oligomers.

Its subcellular location is the cytoplasm. The protein localises to the nucleoid. The protein is Transcriptional regulator MraZ of Chlorobaculum tepidum (strain ATCC 49652 / DSM 12025 / NBRC 103806 / TLS) (Chlorobium tepidum).